The following is a 62-amino-acid chain: Large ribosomal subunit protein bL28 (62 aa).

Belongs to the bacterial ribosomal protein bL28 family.

In Bacillus velezensis (strain DSM 23117 / BGSC 10A6 / LMG 26770 / FZB42) (Bacillus amyloliquefaciens subsp. plantarum), this protein is Large ribosomal subunit protein bL28.